Reading from the N-terminus, the 330-residue chain is Aspartate--ammonia ligase (330 aa).

The protein belongs to the class-II aminoacyl-tRNA synthetase family. AsnA subfamily.

It localises to the cytoplasm. It carries out the reaction L-aspartate + NH4(+) + ATP = L-asparagine + AMP + diphosphate + H(+). It participates in amino-acid biosynthesis; L-asparagine biosynthesis; L-asparagine from L-aspartate (ammonia route): step 1/1. This is Aspartate--ammonia ligase from Streptococcus equi subsp. zooepidemicus (strain H70).